The following is a 42-amino-acid chain: Delta-hexatoxin-Hv1b (42 aa).

Disulfide bonds link Cys1–Cys15, Cys8–Cys20, Cys14–Cys31, and Cys16–Cys42.

It belongs to the neurotoxin 06 (delta-actx) family. In terms of tissue distribution, expressed by the venom gland.

The protein localises to the secreted. In terms of biological role, lethal neurotoxin. Slows the inactivation of tetrodotoxin-sensitive voltage-gated sodium channels (Nav) by binding to site 3 of the channel, resulting in repetitive firing in autonomic and motor nerve fibers. This Hadronyche versuta (Blue mountains funnel-web spider) protein is Delta-hexatoxin-Hv1b.